A 287-amino-acid chain; its full sequence is Steroidogenic acute regulatory protein, mitochondrial (287 aa).

The N-terminal 61 residues, methionine 1–isoleucine 61, are a transit peptide targeting the mitochondrion. Positions glycine 66–valine 279 constitute an START domain.

In terms of assembly, may interact with TSPO.

It is found in the mitochondrion. The catalysed reaction is cholesterol(in) = cholesterol(out). Its pathway is steroid metabolism; cholesterol metabolism. Plays a key role in steroid hormone synthesis by enhancing the metabolism of cholesterol into pregnenolone. Mediates the transfer of cholesterol from the outer mitochondrial membrane to the inner mitochondrial membrane where it is cleaved to pregnenolone. In Oncorhynchus mykiss (Rainbow trout), this protein is Steroidogenic acute regulatory protein, mitochondrial (star).